Reading from the N-terminus, the 442-residue chain is MQVSRPLTVSASPKGLSGRTRVPGDKSISHRSLMFAALASGRTYVTGLLEGEDVLRTADAMRALGATITREGADWVIEGRGVGALTEPADVLDMGNSGTAARLLSGILSSHAFNSIMTGDASLRSRPMRRVTVPLAANGSEFLTREGGRLPMAIRGTGEAKPIEYRLPVASAQVKSAILLAGLNAHGTTVVEEPVATRDHTENMLRHFGVEVDVSRIDAGGRRIALTGPVQMTARDVTVPGDPSSAAFPIVAALLVPGSDIWIEGVGLNPLRTGLFTTLIEMGASLSIENERVEGGEPVGDLHVRYSKLKGVDVPPERAPSMIDEYPVLAVACAFAEGASRLRGLEELRVKESDRLASTVALLNVNGAETEVIGDDLIVKGYHGPLGGGTVQTHMDHRLAMSAVVLGLAAQKPVNVDDTAFIETSFPGFVDLMNALGAGLTP.

Residues 1–11 (MQVSRPLTVSA) are compositionally biased toward polar residues. The segment at 1 to 25 (MQVSRPLTVSASPKGLSGRTRVPGD) is disordered. 3-phosphoshikimate is bound by residues Lys-26, Ser-27, and Arg-31. Residue Lys-26 participates in phosphoenolpyruvate binding. Residues Gly-98 and Arg-126 each contribute to the phosphoenolpyruvate site. 3-phosphoshikimate contacts are provided by Ser-171, Gln-173, Asp-324, and Lys-351. Gln-173 serves as a coordination point for phosphoenolpyruvate. The active-site Proton acceptor is Asp-324. Phosphoenolpyruvate is bound by residues Arg-355 and Arg-398.

This sequence belongs to the EPSP synthase family. In terms of assembly, monomer.

It localises to the cytoplasm. It carries out the reaction 3-phosphoshikimate + phosphoenolpyruvate = 5-O-(1-carboxyvinyl)-3-phosphoshikimate + phosphate. It functions in the pathway metabolic intermediate biosynthesis; chorismate biosynthesis; chorismate from D-erythrose 4-phosphate and phosphoenolpyruvate: step 6/7. In terms of biological role, catalyzes the transfer of the enolpyruvyl moiety of phosphoenolpyruvate (PEP) to the 5-hydroxyl of shikimate-3-phosphate (S3P) to produce enolpyruvyl shikimate-3-phosphate and inorganic phosphate. This Gluconobacter oxydans (strain 621H) (Gluconobacter suboxydans) protein is 3-phosphoshikimate 1-carboxyvinyltransferase.